The following is a 475-amino-acid chain: NADH-quinone oxidoreductase subunit N (475 aa).

Transmembrane regions (helical) follow at residues 5–25 (LALP…FGVV), 32–52 (FLSC…LVVM), 71–91 (FMKI…VGYA), 99–119 (FEFP…ASSE), 121–141 (LMTL…LCAF), 155–175 (YFVL…LVYG), 193–213 (STAV…GLTF), 232–252 (PTSV…ALLL), 266–286 (WQIL…LAAI), 294–314 (LMAY…CAGT), 322–342 (LVYL…IIAM), 366–386 (ATAM…AGFF), 389–409 (MMVF…IGVV), and 439–459 (LSLS…LLVL).

It belongs to the complex I subunit 2 family. In terms of assembly, NDH-1 is composed of 14 different subunits. Subunits NuoA, H, J, K, L, M, N constitute the membrane sector of the complex.

It localises to the cell inner membrane. It catalyses the reaction a quinone + NADH + 5 H(+)(in) = a quinol + NAD(+) + 4 H(+)(out). Its function is as follows. NDH-1 shuttles electrons from NADH, via FMN and iron-sulfur (Fe-S) centers, to quinones in the respiratory chain. The immediate electron acceptor for the enzyme in this species is believed to be ubiquinone. Couples the redox reaction to proton translocation (for every two electrons transferred, four hydrogen ions are translocated across the cytoplasmic membrane), and thus conserves the redox energy in a proton gradient. This chain is NADH-quinone oxidoreductase subunit N, found in Gluconacetobacter diazotrophicus (strain ATCC 49037 / DSM 5601 / CCUG 37298 / CIP 103539 / LMG 7603 / PAl5).